The chain runs to 346 residues: Proto-oncogene serine/threonine-protein kinase mos (346 aa).

Residues 60–341 (VCLLQRLGAG…RPLLVDLTSL (282 aa)) form the Protein kinase domain. ATP contacts are provided by residues 66–74 (LGAGGFGSV) and lysine 87. Catalysis depends on aspartate 201, which acts as the Proton acceptor.

This sequence belongs to the protein kinase superfamily. Ser/Thr protein kinase family.

The enzyme catalyses L-seryl-[protein] + ATP = O-phospho-L-seryl-[protein] + ADP + H(+). It carries out the reaction L-threonyl-[protein] + ATP = O-phospho-L-threonyl-[protein] + ADP + H(+). This chain is Proto-oncogene serine/threonine-protein kinase mos, found in Chlorocebus aethiops (Green monkey).